The following is a 272-amino-acid chain: 4-hydroxy-tetrahydrodipicolinate reductase (272 aa).

NAD(+)-binding positions include 11-16 and glutamate 37; that span reads GAGGRM. Arginine 38 contacts NADP(+). Residues 101–103 and 125–128 contribute to the NAD(+) site; these read GTT and AANF. Catalysis depends on histidine 158, which acts as the Proton donor/acceptor. Histidine 159 contacts (S)-2,3,4,5-tetrahydrodipicolinate. The active-site Proton donor is lysine 162. 168–169 contributes to the (S)-2,3,4,5-tetrahydrodipicolinate binding site; sequence GT.

It belongs to the DapB family. In terms of assembly, homotetramer.

It is found in the cytoplasm. The enzyme catalyses (S)-2,3,4,5-tetrahydrodipicolinate + NAD(+) + H2O = (2S,4S)-4-hydroxy-2,3,4,5-tetrahydrodipicolinate + NADH + H(+). The catalysed reaction is (S)-2,3,4,5-tetrahydrodipicolinate + NADP(+) + H2O = (2S,4S)-4-hydroxy-2,3,4,5-tetrahydrodipicolinate + NADPH + H(+). Its pathway is amino-acid biosynthesis; L-lysine biosynthesis via DAP pathway; (S)-tetrahydrodipicolinate from L-aspartate: step 4/4. Functionally, catalyzes the conversion of 4-hydroxy-tetrahydrodipicolinate (HTPA) to tetrahydrodipicolinate. In Edwardsiella ictaluri (strain 93-146), this protein is 4-hydroxy-tetrahydrodipicolinate reductase.